Here is a 184-residue protein sequence, read N- to C-terminus: ATP synthase subunit b, chloroplastic (184 aa).

A helical membrane pass occupies residues 27 to 49 (LATNPINLSVVLGVLIFFGKGVL).

The protein belongs to the ATPase B chain family. In terms of assembly, F-type ATPases have 2 components, F(1) - the catalytic core - and F(0) - the membrane proton channel. F(1) has five subunits: alpha(3), beta(3), gamma(1), delta(1), epsilon(1). F(0) has four main subunits: a(1), b(1), b'(1) and c(10-14). The alpha and beta chains form an alternating ring which encloses part of the gamma chain. F(1) is attached to F(0) by a central stalk formed by the gamma and epsilon chains, while a peripheral stalk is formed by the delta, b and b' chains.

The protein localises to the plastid. It is found in the chloroplast thylakoid membrane. F(1)F(0) ATP synthase produces ATP from ADP in the presence of a proton or sodium gradient. F-type ATPases consist of two structural domains, F(1) containing the extramembraneous catalytic core and F(0) containing the membrane proton channel, linked together by a central stalk and a peripheral stalk. During catalysis, ATP synthesis in the catalytic domain of F(1) is coupled via a rotary mechanism of the central stalk subunits to proton translocation. Its function is as follows. Component of the F(0) channel, it forms part of the peripheral stalk, linking F(1) to F(0). The sequence is that of ATP synthase subunit b, chloroplastic from Piper cenocladum (Ant piper).